A 261-amino-acid chain; its full sequence is Putative hydro-lyase SH0274 (261 aa).

This sequence belongs to the D-glutamate cyclase family.

In Staphylococcus haemolyticus (strain JCSC1435), this protein is Putative hydro-lyase SH0274.